Consider the following 478-residue polypeptide: MNEHALKNIPLRLYNTAERQKQELKPIKGNHIQLYTCGPTVYHYAHIGNFRTYIFEDLLRRTIQFFGFSITQVMNLTDVDDKTIRGAIAKGITLDEYTKPYKDAFFEDLKTLNIQSAEYYPAATDYIPAMIEMIKVLLDKKVAYKGGDGSIYYAINQFPRYGCLSHLHLEDLQAGASERVAADEYEKEHVADFVLWKSYDSERDGQIYWESPFGLGRPGWHLECSAMAMHLLGETIDIHVGGIDNMFPHHENEIAQSEACSGKKFVNLWMHAEHLVVDQKKMSKSLGNFYTLRDLLNKGFTGIQVRYLLLQTHYKTQLNFTFQGVESVKSSLQRLNDFIQRIYNIQTLQSDGQVDLLVNDALIRFAEALADDLNISSALAAIFDFVREINCLCDVNQVSQKEAETVINLMKKFDTILGVLTFDKREESIPVDLQEAFAKRQQARQEKNWTLSDELRDFIHQRGYLIEDTPQGTRLKKQ.

Cysteine 37 serves as a coordination point for Zn(2+). The 'HIGH' region signature appears at 39–49 (PTVYHYAHIGN). Cysteine 224, histidine 249, and glutamate 253 together coordinate Zn(2+). The 'KMSKS' region motif lies at 281-285 (KMSKS). ATP is bound at residue lysine 284.

It belongs to the class-I aminoacyl-tRNA synthetase family. In terms of assembly, monomer. Requires Zn(2+) as cofactor.

It localises to the cytoplasm. It catalyses the reaction tRNA(Cys) + L-cysteine + ATP = L-cysteinyl-tRNA(Cys) + AMP + diphosphate. This is Cysteine--tRNA ligase from Protochlamydia amoebophila (strain UWE25).